The chain runs to 274 residues: Formamidopyrimidine-DNA glycosylase (274 aa).

The active-site Schiff-base intermediate with DNA is P2. E3 acts as the Proton donor in catalysis. The active-site Proton donor; for beta-elimination activity is the K57. DNA is bound by residues H92, R111, and K152. The segment at 237-271 (QVYGRKGEECRECGTLIQAKVIGQRNSYFCPDCQP) adopts an FPG-type zinc-finger fold. R261 functions as the Proton donor; for delta-elimination activity in the catalytic mechanism.

It belongs to the FPG family. In terms of assembly, monomer. The cofactor is Zn(2+).

The catalysed reaction is Hydrolysis of DNA containing ring-opened 7-methylguanine residues, releasing 2,6-diamino-4-hydroxy-5-(N-methyl)formamidopyrimidine.. It carries out the reaction 2'-deoxyribonucleotide-(2'-deoxyribose 5'-phosphate)-2'-deoxyribonucleotide-DNA = a 3'-end 2'-deoxyribonucleotide-(2,3-dehydro-2,3-deoxyribose 5'-phosphate)-DNA + a 5'-end 5'-phospho-2'-deoxyribonucleoside-DNA + H(+). Involved in base excision repair of DNA damaged by oxidation or by mutagenic agents. Acts as a DNA glycosylase that recognizes and removes damaged bases. Has a preference for oxidized purines, such as 7,8-dihydro-8-oxoguanine (8-oxoG). Has AP (apurinic/apyrimidinic) lyase activity and introduces nicks in the DNA strand. Cleaves the DNA backbone by beta-delta elimination to generate a single-strand break at the site of the removed base with both 3'- and 5'-phosphates. This is Formamidopyrimidine-DNA glycosylase from Haemophilus ducreyi (strain 35000HP / ATCC 700724).